A 1382-amino-acid chain; its full sequence is DNA-directed RNA polymerase subunit beta'' (1382 aa).

Positions 224, 294, 301, and 304 each coordinate Zn(2+).

It belongs to the RNA polymerase beta' chain family. RpoC2 subfamily. In plastids the minimal PEP RNA polymerase catalytic core is composed of four subunits: alpha, beta, beta', and beta''. When a (nuclear-encoded) sigma factor is associated with the core the holoenzyme is formed, which can initiate transcription. The cofactor is Zn(2+).

It localises to the plastid. The protein localises to the chloroplast. It catalyses the reaction RNA(n) + a ribonucleoside 5'-triphosphate = RNA(n+1) + diphosphate. Functionally, DNA-dependent RNA polymerase catalyzes the transcription of DNA into RNA using the four ribonucleoside triphosphates as substrates. This chain is DNA-directed RNA polymerase subunit beta'', found in Liriodendron tulipifera (Tuliptree).